The chain runs to 163 residues: ATP synthase subunit b 2 (163 aa).

Residues 5–25 traverse the membrane as a helical segment; it reads SLATLWATIALIIFLGVAIYI.

This sequence belongs to the ATPase B chain family. F-type ATPases have 2 components, F(1) - the catalytic core - and F(0) - the membrane proton channel. F(1) has five subunits: alpha(3), beta(3), gamma(1), delta(1), epsilon(1). F(0) has three main subunits: a(1), b(2) and c(10-14). The alpha and beta chains form an alternating ring which encloses part of the gamma chain. F(1) is attached to F(0) by a central stalk formed by the gamma and epsilon chains, while a peripheral stalk is formed by the delta and b chains.

The protein localises to the cell inner membrane. Functionally, f(1)F(0) ATP synthase produces ATP from ADP in the presence of a proton or sodium gradient. F-type ATPases consist of two structural domains, F(1) containing the extramembraneous catalytic core and F(0) containing the membrane proton channel, linked together by a central stalk and a peripheral stalk. During catalysis, ATP synthesis in the catalytic domain of F(1) is coupled via a rotary mechanism of the central stalk subunits to proton translocation. In terms of biological role, component of the F(0) channel, it forms part of the peripheral stalk, linking F(1) to F(0). The sequence is that of ATP synthase subunit b 2 from Mesorhizobium japonicum (strain LMG 29417 / CECT 9101 / MAFF 303099) (Mesorhizobium loti (strain MAFF 303099)).